The sequence spans 514 residues: Putative selenium-binding protein (514 aa).

The protein belongs to the selenium-binding protein family.

The protein is Putative selenium-binding protein of Caenorhabditis briggsae.